Reading from the N-terminus, the 348-residue chain is Putative [LysW]-L-2-aminoadipate/[LysW]-L-glutamate phosphate reductase (348 aa).

9–12 (SGYV) is a binding site for NADP(+). The active site involves Cys149. Residue Asn315 participates in NADP(+) binding.

Belongs to the NAGSA dehydrogenase family. Type 1 subfamily. LysY sub-subfamily.

The protein localises to the cytoplasm. The catalysed reaction is [amino-group carrier protein]-C-terminal-N-(1-carboxy-5-oxopentan-1-yl)-L-glutamine + phosphate + NADP(+) = [amino-group carrier protein]-C-terminal-N-(1-carboxy-5-phosphooxy-5-oxopentan-1-yl)-L-glutamine + NADPH + H(+). It carries out the reaction [amino-group carrier protein]-C-terminal-gamma-(L-glutamyl-5-semialdehyde)-L-glutamate + phosphate + NADP(+) = [amino-group carrier protein]-C-terminal-gamma-(5-phospho-L-glutamyl)-L-glutamate + NADPH + H(+). It functions in the pathway amino-acid biosynthesis; L-lysine biosynthesis via AAA pathway; L-lysine from L-alpha-aminoadipate (Thermus route): step 3/5. The protein operates within amino-acid biosynthesis; L-arginine biosynthesis. Functionally, involved in both the arginine and lysine biosynthetic pathways. This is Putative [LysW]-L-2-aminoadipate/[LysW]-L-glutamate phosphate reductase from Cenarchaeum symbiosum (strain A).